The primary structure comprises 192 residues: Probable nicotinate-nucleotide adenylyltransferase (192 aa).

The protein belongs to the NadD family.

It catalyses the reaction nicotinate beta-D-ribonucleotide + ATP + H(+) = deamido-NAD(+) + diphosphate. It functions in the pathway cofactor biosynthesis; NAD(+) biosynthesis; deamido-NAD(+) from nicotinate D-ribonucleotide: step 1/1. Functionally, catalyzes the reversible adenylation of nicotinate mononucleotide (NaMN) to nicotinic acid adenine dinucleotide (NaAD). The chain is Probable nicotinate-nucleotide adenylyltransferase from Bradyrhizobium sp. (strain BTAi1 / ATCC BAA-1182).